Consider the following 230-residue polypeptide: NAD(P)H-quinone oxidoreductase subunit K, chloroplastic (230 aa).

Residues Cys-43, Cys-44, Cys-108, and Cys-139 each coordinate [4Fe-4S] cluster.

This sequence belongs to the complex I 20 kDa subunit family. As to quaternary structure, NDH is composed of at least 16 different subunits, 5 of which are encoded in the nucleus. The cofactor is [4Fe-4S] cluster.

It localises to the plastid. The protein localises to the chloroplast thylakoid membrane. It carries out the reaction a plastoquinone + NADH + (n+1) H(+)(in) = a plastoquinol + NAD(+) + n H(+)(out). The catalysed reaction is a plastoquinone + NADPH + (n+1) H(+)(in) = a plastoquinol + NADP(+) + n H(+)(out). Its function is as follows. NDH shuttles electrons from NAD(P)H:plastoquinone, via FMN and iron-sulfur (Fe-S) centers, to quinones in the photosynthetic chain and possibly in a chloroplast respiratory chain. The immediate electron acceptor for the enzyme in this species is believed to be plastoquinone. Couples the redox reaction to proton translocation, and thus conserves the redox energy in a proton gradient. The polypeptide is NAD(P)H-quinone oxidoreductase subunit K, chloroplastic (Lotus japonicus (Lotus corniculatus var. japonicus)).